The sequence spans 196 residues: FMN-dependent NADH:quinone oxidoreductase (196 aa).

S10 provides a ligand contact to FMN.

It belongs to the azoreductase type 1 family. As to quaternary structure, homodimer. FMN serves as cofactor.

It catalyses the reaction 2 a quinone + NADH + H(+) = 2 a 1,4-benzosemiquinone + NAD(+). It carries out the reaction N,N-dimethyl-1,4-phenylenediamine + anthranilate + 2 NAD(+) = 2-(4-dimethylaminophenyl)diazenylbenzoate + 2 NADH + 2 H(+). Its function is as follows. Quinone reductase that provides resistance to thiol-specific stress caused by electrophilic quinones. Functionally, also exhibits azoreductase activity. Catalyzes the reductive cleavage of the azo bond in aromatic azo compounds to the corresponding amines. The polypeptide is FMN-dependent NADH:quinone oxidoreductase (Cereibacter sphaeroides (strain ATCC 17029 / ATH 2.4.9) (Rhodobacter sphaeroides)).